The sequence spans 1275 residues: O-antigen biosynthesis protein RfbC (1275 aa).

In terms of biological role, involved in O-antigen biosynthesis. This chain is O-antigen biosynthesis protein RfbC (rfbC), found in Myxococcus xanthus.